Consider the following 507-residue polypeptide: Maturase K (507 aa).

This sequence belongs to the intron maturase 2 family. MatK subfamily.

It localises to the plastid. It is found in the chloroplast. Functionally, usually encoded in the trnK tRNA gene intron. Probably assists in splicing its own and other chloroplast group II introns. In Fagopyrum tataricum (Tartarian buckwheat), this protein is Maturase K.